Here is a 769-residue protein sequence, read N- to C-terminus: Acetyl-coenzyme A carboxylase carboxyl transferase subunit alpha, chloroplastic (769 aa).

The transit peptide at 1–54 (MASISHSSLALGGASSASASDYLRSSSNGVNGVPLKTLGRAVFTTIRRKDLAVT) directs the protein to the chloroplast. The region spanning 132–385 (LENKYRQALK…KIAINENMNE (254 aa)) is the CoA carboxyltransferase C-terminal domain. Coiled coils occupy residues 426–504 (EAVF…ASSE) and 631–744 (KQNQ…SDGS). The tract at residues 718 to 769 (GLQEKQDELEKELAAARELAAEESDGSVKEDDDDDEDSSESGKSEMVNPSFA) is disordered. The segment covering 721 to 732 (EKQDELEKELAA) has biased composition (basic and acidic residues). A compositionally biased stretch (acidic residues) spans 738-756 (AEESDGSVKEDDDDDEDSS). At serine 741 the chain carries Phosphoserine.

It belongs to the AccA family. As to quaternary structure, acetyl-CoA carboxylase is a heterohexamer composed of biotin carboxyl carrier protein, biotin carboxylase and two subunits each of ACCase subunit alpha and ACCase plastid-coded subunit beta (accD). Accumulates in fatty acids synthesizing tissues such as embryos, expanding leaves, flower buds, flowers, and developing siliques.

The protein localises to the plastid. The protein resides in the chloroplast inner membrane. It carries out the reaction N(6)-carboxybiotinyl-L-lysyl-[protein] + acetyl-CoA = N(6)-biotinyl-L-lysyl-[protein] + malonyl-CoA. It participates in lipid metabolism; malonyl-CoA biosynthesis; malonyl-CoA from acetyl-CoA: step 1/1. Functionally, component of the acetyl coenzyme A carboxylase (ACC) complex. First, biotin carboxylase catalyzes the carboxylation of biotin on its carrier protein (BCCP) and then the CO(2) group is transferred by the carboxyltransferase to acetyl-CoA to form malonyl-CoA. This chain is Acetyl-coenzyme A carboxylase carboxyl transferase subunit alpha, chloroplastic (CAC3), found in Arabidopsis thaliana (Mouse-ear cress).